The chain runs to 384 residues: Lipid-A-disaccharide synthase 1 (384 aa).

The protein belongs to the LpxB family.

It catalyses the reaction a lipid X + a UDP-2-N,3-O-bis[(3R)-3-hydroxyacyl]-alpha-D-glucosamine = a lipid A disaccharide + UDP + H(+). The protein operates within bacterial outer membrane biogenesis; LPS lipid A biosynthesis. Its function is as follows. Condensation of UDP-2,3-diacylglucosamine and 2,3-diacylglucosamine-1-phosphate to form lipid A disaccharide, a precursor of lipid A, a phosphorylated glycolipid that anchors the lipopolysaccharide to the outer membrane of the cell. The chain is Lipid-A-disaccharide synthase 1 from Legionella pneumophila (strain Lens).